Consider the following 963-residue polypeptide: Ubiquitin carboxyl-terminal hydrolase 4 (963 aa).

Positions 11–122 constitute a DUSP domain; it reads PDAETQKSEL…GQQPIVRKVV (112 aa). Residues 27-216 form a necessary for interaction with SART3 region; the sequence is TLQRGAQWYL…LYLGQVLVIE (190 aa). The Nuclear export signal signature appears at 133–141; sequence VEVYLLELK. One can recognise a Ubiquitin-like 1 domain in the interval 142–226; that stretch reads LCENSDPTNV…PQNEDGTWPR (85 aa). The segment at 220-255 is disordered; that stretch reads EDGTWPRQTLQSKSSTAPSRNFTTSPKSSASPYSSV. Residues 225–243 are compositionally biased toward polar residues; sequence PRQTLQSKSSTAPSRNFTT. Positions 229 to 295 are required for USP4 activation by providing conformational flexibility between the DUSP and catalytic domains; it reads LQSKSSTAPS…SYNCQEPPSS (67 aa). Over residues 244-255 the composition is skewed to low complexity; it reads SPKSSASPYSSV. The region spanning 302–923 is the USP domain; that stretch reads CGLGNLGNTC…AAYVLFYQRR (622 aa). Cys311 serves as the catalytic Nucleophile. Residues 384-386 are regulates ubiquitin dissociation; it reads PQF. Positions 405–407 are necessary for interaction with RBL2; it reads LHE. Ser445 is subject to Phosphoserine. The segment at 459–463 is necessary for interaction with RB1 and RBL2; it reads LVCPE. The Zn(2+) site is built by Cys461 and Cys464. The 89-residue stretch at 483–571 folds into the Ubiquitin-like 2 domain; that stretch reads LKKDRVMEVF…IFVYEVCSTS (89 aa). Residues 485–775 are interacts with DUSP and ubiquitin-like 1 domains and is required for USP4 activation; the sequence is KDRVMEVFLV…LQPQKKKKTT (291 aa). The segment at 637-698 is disordered; sequence DEFGSSPLEP…PSETTQKKIK (62 aa). Ser655 is modified (phosphoserine). Acidic residues predominate over residues 657–666; that stretch reads EGEDEEEMEH. A phosphoserine mark is found at Ser675 and Ser680. The short motif at 767-772 is the Nuclear localization signal element; that stretch reads QPQKKK. Zn(2+) is bound by residues Cys799 and Cys802. The Proton acceptor role is filled by His881. Residues 928 to 963 form a disordered region; it reads YKTPSLSSSGSSDGGTRPSSSQQGLGDDEACSMDTN. The segment covering 932–948 has biased composition (low complexity); that stretch reads SLSSSGSSDGGTRPSSS. The span at 953-963 shows a compositional bias: acidic residues; the sequence is GDDEACSMDTN.

Belongs to the peptidase C19 family. USP4 subfamily. Interacts with RB1 (both dephosphorylated and hypophosphorylated forms). Interacts with RBL1 and RBL2. Interacts with ADORA2A (via cytoplasmic C-terminus); the interaction is direct. Interacts with SART3; recruits USP4 to its substrate PRPF3. In terms of processing, phosphorylated at Ser-445 by PKB/AKT1 in response to EGF stimulus, promoting its ability deubiquitinate RHEB. Post-translationally, monoubiquitinated by TRIM21. Ubiquitination does not lead to its proteasomal degradation. Autodeubiquitinated.

It localises to the cytoplasm. It is found in the nucleus. The catalysed reaction is Thiol-dependent hydrolysis of ester, thioester, amide, peptide and isopeptide bonds formed by the C-terminal Gly of ubiquitin (a 76-residue protein attached to proteins as an intracellular targeting signal).. The completion of the deubiquitinase reaction is mediated by the DUSP and ubiquitin-like 1 domains which promotes the release of ubiquitin from the catalytic site enabling subsequent reactions to occur. Its function is as follows. Deubiquitinating enzyme that removes conjugated ubiquitin from target proteins. Deubiquitinates PDPK1. Deubiquitinates TRIM21. Deubiquitinates receptor ADORA2A which increases the amount of functional receptor at the cell surface. Deubiquitinates HAS2. Deubiquitinates RHEB in response to EGF signaling, promoting mTORC1 signaling. May regulate mRNA splicing through deubiquitination of the U4 spliceosomal protein PRPF3. This may prevent its recognition by the U5 component PRPF8 thereby destabilizing interactions within the U4/U6.U5 snRNP. May also play a role in the regulation of quality control in the ER. The polypeptide is Ubiquitin carboxyl-terminal hydrolase 4 (USP4) (Pongo abelii (Sumatran orangutan)).